A 23-amino-acid polypeptide reads, in one-letter code: Phallacidin proprotein 1 (23 aa).

A propeptide is located at residue Pro-1. The cyclopeptide (Ala-Pro) cross-link spans 2-8 (AWLVDCP). Positions 3 to 7 (WLVDC) form a cross-link, 2'-cysteinyl-6'-hydroxytryptophan sulfoxide (Trp-Cys). Residues 9–23 (CVGDDINRLLTRGEK) constitute a propeptide that is removed on maturation.

The protein belongs to the MSDIN fungal toxin family. In terms of processing, processed by the macrocyclase-peptidase enzyme POPB to yield a toxic cyclic heptapeptide. POPB first removes 10 residues from the N-terminus. Conformational trapping of the remaining peptide forces the enzyme to release this intermediate rather than proceed to macrocyclization. The enzyme rebinds the remaining peptide in a different conformation and catalyzes macrocyclization of the N-terminal 7 residues.

Functionally, major toxin that belongs to the bicyclic heptapeptides called phallotoxins. Although structurally related to amatoxins, phallotoxins have a different mode of action, which is the stabilization of F-actin. Phallotoxins are poisonous when administered parenterally, but not orally because of poor absorption. This chain is Phallacidin proprotein 1, found in Amanita phalloides (Death cap).